A 1364-amino-acid chain; its full sequence is Formin-like protein 6 (1364 aa).

The 185-residue stretch at 9–193 (YRKPPDGLLE…HYISRRNVSA (185 aa)) folds into the Phosphatase tensin-type domain. Cys126 functions as the Phosphocysteine intermediate in the catalytic mechanism. The C2 tensin-type domain occupies 199-338 (DRALTLDCVI…FRAEVLFSEM (140 aa)). 3 disordered regions span residues 614 to 934 (KCTP…NLKP), 976 to 999 (VLPS…KPEK), and 1317 to 1364 (EAEA…ASAK). Pro residues predominate over residues 617 to 631 (PSPPPLLPPLAPVVP). Over residues 657-690 (SFPSLSPTQQKQSTSKLCQTILPTNHQLSSSNIT) the composition is skewed to polar residues. Over residues 734 to 743 (PPAPPPPPLQ) the composition is skewed to pro residues. Residues 744–757 (SPSTPRCSPVRTLA) show a composition bias toward low complexity. Composition is skewed to pro residues over residues 774–813 (GPPP…PAAP) and 856–865 (PSPPPPPPPC). Residues 916 to 929 (MSRSLQSGQAASRR) are compositionally biased toward polar residues. The 401-residue stretch at 922–1322 (SGQAASRRSN…KALKEAEAEK (401 aa)) folds into the FH2 domain. Basic and acidic residues predominate over residues 1317 to 1351 (EAEAEKTKKEPENAQKTKEPGNDKAKHNNSIKELD). Positions 1353–1364 (SLQSPAQTASAK) are enriched in polar residues.

It belongs to the formin-like family. Class-II subfamily.

This is Formin-like protein 6 (FH6) from Oryza sativa subsp. japonica (Rice).